The chain runs to 156 residues: Ecotin (156 aa).

Residues 1–19 (MKALLIAAGVAALSSTAMA) form the signal peptide. The cysteines at positions 65 and 102 are disulfide-linked.

It belongs to the protease inhibitor I11 (ecotin) family. In terms of assembly, homodimer.

Its subcellular location is the periplasm. Its function is as follows. General inhibitor of family S1 serine proteases. The sequence is that of Ecotin from Pseudomonas aeruginosa (strain LESB58).